The following is a 332-amino-acid chain: 2,3-diketo-L-gulonate reductase (332 aa).

H44 serves as the catalytic Proton donor. Residues 168–174 (ITMIDMS), 224–225 (WK), and 304–306 (GHE) each bind NAD(+).

It belongs to the LDH2/MDH2 oxidoreductase family. DlgD subfamily. Homodimer.

It localises to the cytoplasm. It catalyses the reaction 3-dehydro-L-gulonate + NAD(+) = 2,3-dioxo-L-gulonate + NADH + H(+). The catalysed reaction is 3-dehydro-L-gulonate + NADP(+) = 2,3-dioxo-L-gulonate + NADPH + H(+). In terms of biological role, catalyzes the reduction of 2,3-diketo-L-gulonate in the presence of NADH, to form 3-keto-L-gulonate. The polypeptide is 2,3-diketo-L-gulonate reductase (Citrobacter koseri (strain ATCC BAA-895 / CDC 4225-83 / SGSC4696)).